The primary structure comprises 277 residues: F420-dependent methylenetetrahydromethanopterin dehydrogenase (277 aa).

Belongs to the MTD family.

The catalysed reaction is 5,10-methylenetetrahydromethanopterin + oxidized coenzyme F420-(gamma-L-Glu)(n) + 2 H(+) = 5,10-methenyl-5,6,7,8-tetrahydromethanopterin + reduced coenzyme F420-(gamma-L-Glu)(n). It functions in the pathway one-carbon metabolism; methanogenesis from CO(2); 5,10-methylene-5,6,7,8-tetrahydromethanopterin from 5,10-methenyl-5,6,7,8-tetrahydromethanopterin (coenzyme F420 route): step 1/1. Functionally, catalyzes the reversible reduction of methenyl-H(4)MPT(+) to methylene-H(4)MPT. This is F420-dependent methylenetetrahydromethanopterin dehydrogenase from Methanococcus maripaludis (strain DSM 14266 / JCM 13030 / NBRC 101832 / S2 / LL).